Consider the following 255-residue polypeptide: MAVGNINELPENILLELFIHIPARQLLLRCRPVCSLWRDLIDLVTLWKRKCLQEGFITEDWDQPVADWKIFYFLRSLQRNLLHNPCAEEGFEFWSLDVNGGDEWKVEDLSKDQRKEFPNDQVKKYFVTSYYTCLKSQVVDLKAEGYWEELMDTTRPDIEVKDWFAARPDCGSKYQLCVQLLSSAHAPLGTFQPDPVMIQQKSDAKWSEVSHTFSNYPPGVRYIWFQHGGVDTHYWAGWYGPRVTNSSITIGPPLP.

The 48-residue stretch at 3 to 50 (VGNINELPENILLELFIHIPARQLLLRCRPVCSLWRDLIDLVTLWKRK) folds into the F-box domain. The FBA domain occupies 71–252 (FYFLRSLQRN…VTNSSITIGP (182 aa)).

In terms of assembly, part of a SCF (SKP1-cullin-F-box) protein ligase complex. Interacts with SKP1 and CUL1. As to expression, expressed in brain, liver, pancreas and adipose tissue (at protein level). Widely expressed.

Its function is as follows. Substrate-recognition component of the SCF (SKP1-CUL1-F-box protein)-type E3 ubiquitin ligase complex. This chain is F-box only protein 44 (Fbxo44), found in Mus musculus (Mouse).